A 184-amino-acid polypeptide reads, in one-letter code: Putative manganese efflux pump MntP (184 aa).

Transmembrane regions (helical) follow at residues 39-59, 65-85, 102-122, 132-152, and 161-181; these read IFGVFQALMPFLGYILGLSFV, IDHFIAFGILGFLGAKMILEA, LALGAVATSIDALAVGITFSF, LIIGTVCFVLCTAACYVGKIL, and LVLGGLILIGLGTKILITHLV.

The protein belongs to the MntP (TC 9.B.29) family.

The protein localises to the cell inner membrane. Its function is as follows. Probably functions as a manganese efflux pump. The chain is Putative manganese efflux pump MntP from Campylobacter curvus (strain 525.92).